Consider the following 116-residue polypeptide: Cation channel sperm-associated auxiliary subunit TMEM262 (116 aa).

Residues 1-16 lie on the Cytoplasmic side of the membrane; the sequence is MWLQDRIATFFFPKGM. Residues 17-38 form a helical membrane-spanning segment; that stretch reads MLTTAALMLFFLHLGIFIRDVH. Residues 39-51 are Extracellular-facing; that stretch reads NFCITYHYDHMSF. Residues 52–72 traverse the membrane as a helical segment; sequence HYTVVLMFSQVISICWAAMGS. The Cytoplasmic segment spans residues 73–84; it reads LYAEMTENKYVC. Residues 85-107 form a helical membrane-spanning segment; it reads FSALTILMLNGAMFFNRLSLEFL. The Extracellular portion of the chain corresponds to 108–116; the sequence is AIEYREEHH.

Component of the CatSper complex or CatSpermasome composed of the core pore-forming members CATSPER1, CATSPER2, CATSPER3 and CATSPER4 as well as auxiliary members CATSPERB, CATSPERG, CATSPERD, CATSPERE, CATSPERZ, C2CD6/CATSPERT, TMEM249, TMEM262 and EFCAB9. HSPA1 may be an additional auxiliary complex member. The core complex members CATSPER1, CATSPER2, CATSPER3 and CATSPER4 form a heterotetrameric channel. The auxiliary CATSPERB, CATSPERG, CATSPERD and CATSPERE subunits form a pavilion-like structure over the pore which stabilizes the complex through interactions with CATSPER4, CATSPER3, CATSPER1 and CATSPER2 respectively. TMEM262/CATSPERH interacts with CATSPERB, further stabilizing the complex. C2CD6/CATSPERT interacts at least with CATSPERD and is required for targeting the CatSper complex in the flagellar membrane.

The protein localises to the cell projection. It is found in the cilium. The protein resides in the flagellum membrane. In terms of biological role, auxiliary component of the CatSper complex, a complex involved in sperm cell hyperactivation. The sequence is that of Cation channel sperm-associated auxiliary subunit TMEM262 from Homo sapiens (Human).